The primary structure comprises 498 residues: L-xylulose/3-keto-L-gulonate kinase (498 aa).

Belongs to the FGGY kinase family. As to quaternary structure, homodimer.

The catalysed reaction is L-xylulose + ATP = L-xylulose 5-phosphate + ADP + H(+). It carries out the reaction 3-dehydro-L-gulonate + ATP = 3-dehydro-L-gulonate 6-phosphate + ADP + H(+). Its function is as follows. Catalyzes the phosphorylation of L-xylulose and 3-keto-L-gulonate. Is involved in L-lyxose utilization via xylulose, and may also be involved in the utilization of 2,3-diketo-L-gulonate. The protein is L-xylulose/3-keto-L-gulonate kinase (lyx) of Escherichia coli (strain K12).